The chain runs to 261 residues: Syntaxin-7 (261 aa).

N-acetylserine is present on serine 2. The Cytoplasmic portion of the chain corresponds to 2 to 238 (SYTPGVGGDP…DYQRKSRKTL (237 aa)). Phosphothreonine is present on threonine 4. Residue serine 45 is modified to Phosphoserine. Residues 47–69 (ELRQQLQQKQQYTNQLAKETDKY) are a coiled coil. Serine 75 carries the post-translational modification Phosphoserine. Threonine 79 is subject to Phosphothreonine. Phosphoserine is present on residues serine 125, serine 126, serine 129, and serine 205. The interval 129-148 (SGSFPEDSSKERNLVSWESQ) is disordered. The 63-residue stretch at 165 to 227 (LRLIHERESS…QQANQQLSRA (63 aa)) folds into the t-SNARE coiled-coil homology domain. A helical; Anchor for type IV membrane protein transmembrane segment spans residues 239 to 259 (CIIILILVIGVAIISLIIWGL). Topologically, residues 260–261 (NH) are vesicular.

The protein belongs to the syntaxin family. Forms a SNARE complex with VTI1B, STX8 and VAMP8 which functions in the homotypic fusion of late endosomes. Component of the SNARE complex composed of STX7, STX8, VAMP7 and VTI1B that is required for heterotypic fusion of late endosomes with lysosomes. Interacts with VPS11, VPS16 and VPS18. Interacts with VPS33A. Interacts with TPC1. In terms of tissue distribution, highest expression is found in placenta followed by heart, skeletal muscle, kidney and brain. Low expression is found in pancreas, lung and liver.

It is found in the early endosome membrane. Functionally, may be involved in protein trafficking from the plasma membrane to the early endosome (EE) as well as in homotypic fusion of endocytic organelles. Mediates the endocytic trafficking from early endosomes to late endosomes and lysosomes. This chain is Syntaxin-7 (STX7), found in Homo sapiens (Human).